The primary structure comprises 136 residues: Large ribosomal subunit protein uL16 (136 aa).

It belongs to the universal ribosomal protein uL16 family. In terms of assembly, part of the 50S ribosomal subunit.

Binds 23S rRNA and is also seen to make contacts with the A and possibly P site tRNAs. The protein is Large ribosomal subunit protein uL16 of Shewanella loihica (strain ATCC BAA-1088 / PV-4).